The sequence spans 251 residues: Flap endonuclease Xni (251 aa).

Position 104 (Asp-104) interacts with Mg(2+). Residues 160–249 enclose the 5'-3' exonuclease domain; it reads VQPQQLPDYW…IDGNLQQLRL (90 aa). Positions 171, 172, 180, 182, and 185 each coordinate K(+). Residues 184-189 form an interaction with DNA region; it reads GIGPKS.

Belongs to the Xni family. The cofactor is Mg(2+). K(+) is required as a cofactor.

Has flap endonuclease activity. During DNA replication, flap endonucleases cleave the 5'-overhanging flap structure that is generated by displacement synthesis when DNA polymerase encounters the 5'-end of a downstream Okazaki fragment. The protein is Flap endonuclease Xni of Escherichia coli O139:H28 (strain E24377A / ETEC).